The sequence spans 365 residues: Phospho-N-acetylmuramoyl-pentapeptide-transferase (365 aa).

A run of 9 helical transmembrane segments spans residues Leu-47–Leu-67, Pro-92–Gly-112, Ser-114–Asp-134, Leu-153–Trp-173, Ile-180–Phe-200, Leu-215–Ala-235, Pro-239–Asn-259, Ala-281–Leu-301, and Thr-344–Leu-364.

This sequence belongs to the glycosyltransferase 4 family. MraY subfamily. The cofactor is Mg(2+).

The protein resides in the cell inner membrane. The catalysed reaction is UDP-N-acetyl-alpha-D-muramoyl-L-alanyl-gamma-D-glutamyl-meso-2,6-diaminopimeloyl-D-alanyl-D-alanine + di-trans,octa-cis-undecaprenyl phosphate = di-trans,octa-cis-undecaprenyl diphospho-N-acetyl-alpha-D-muramoyl-L-alanyl-D-glutamyl-meso-2,6-diaminopimeloyl-D-alanyl-D-alanine + UMP. It participates in cell wall biogenesis; peptidoglycan biosynthesis. Its function is as follows. Catalyzes the initial step of the lipid cycle reactions in the biosynthesis of the cell wall peptidoglycan: transfers peptidoglycan precursor phospho-MurNAc-pentapeptide from UDP-MurNAc-pentapeptide onto the lipid carrier undecaprenyl phosphate, yielding undecaprenyl-pyrophosphoryl-MurNAc-pentapeptide, known as lipid I. The sequence is that of Phospho-N-acetylmuramoyl-pentapeptide-transferase from Synechococcus elongatus (strain ATCC 33912 / PCC 7942 / FACHB-805) (Anacystis nidulans R2).